Here is a 518-residue protein sequence, read N- to C-terminus: Retinal dehydrogenase 2 (518 aa).

NAD(+) contacts are provided by residues 184–186 (IPW), 210–213 (KPAE), and 264–266 (STE). E286 serves as the catalytic Proton acceptor. C320 acts as the Nucleophile in catalysis. NAD(+) is bound by residues 366–370 (KQYNK) and E417.

The protein belongs to the aldehyde dehydrogenase family. In terms of assembly, homotetramer.

It localises to the cytoplasm. The enzyme catalyses retinal + NAD(+) + H2O = retinoate + NADH + 2 H(+). The catalysed reaction is all-trans-retinal + NAD(+) + H2O = all-trans-retinoate + NADH + 2 H(+). It carries out the reaction all-trans-13,14-dihydroretinal + NAD(+) + H2O = all-trans-13,14-dihydroretinoate + NADH + 2 H(+). It functions in the pathway cofactor metabolism; retinol metabolism. In terms of biological role, catalyzes the NAD-dependent oxidation of aldehyde substrates, such as all-trans-retinal and all-trans-13,14-dihydroretinal, to their corresponding carboxylic acids, all-trans-retinoate and all-trans-13,14-dihydroretinoate, respectively. Retinoate signaling is critical for the transcriptional control of many genes, for instance it is crucial for initiation of meiosis in both male and female. Recognizes retinal as substrate, both in its free form and when bound to cellular retinol-binding protein. Lacks activity with benzaldehyde, acetaldehyde and octanal. Displays complete lack of activity with citral. In Gallus gallus (Chicken), this protein is Retinal dehydrogenase 2 (ALDH1A2).